Consider the following 295-residue polypeptide: Small ribosomal subunit protein uS2 (295 aa).

The residue at position 2 (S2) is an N-acetylserine. S43 is modified (phosphoserine). K52 is subject to N6-acetyllysine. Residues 54 to 113 (TWEKLLLAARAIVAIENPADVSVISSRNTGQRAVLKFAAATGATPIAGRFTPGTFTNQIQ) form an interaction with PPP1R16B region. An N6-acetyllysine; alternate modification is found at K89. K89 is covalently cross-linked (Glycyl lysine isopeptide (Lys-Gly) (interchain with G-Cter in SUMO2); alternate). T97 is modified (phosphothreonine). 2 laminin-binding regions span residues 161–180 (IPCN…MLAR) and 205–229 (RDPE…EFQG). [DE]-W-[ST] repeat units follow at residues 230-232 (EWT), 247-249 (DWS), 266-268 (DWS), 275-277 (DWS), and 293-295 (EWS). The segment at 242-295 (QPEVADWSEGVQVPSVPIQQFPTEDWSAQPATEDWSAAPTAQATEWVGTTTEWS) is laminin-binding. Positions 266 to 295 (DWSAQPATEDWSAAPTAQATEWVGTTTEWS) are disordered. The span at 280 to 295 (PTAQATEWVGTTTEWS) shows a compositional bias: polar residues.

It belongs to the universal ribosomal protein uS2 family. As to quaternary structure, monomer (37LRP) and homodimer (67LR). Component of the small ribosomal subunit. Mature ribosomes consist of a small (40S) and a large (60S) subunit. The 40S subunit contains about 33 different proteins and 1 molecule of RNA (18S). The 60S subunit contains about 49 different proteins and 3 molecules of RNA (28S, 5.8S and 5S). Interacts with RPS21. Interacts with several laminins including at least LAMB1. Interacts with MDK. The mature dimeric form interacts with PPP1R16B (via its fourth ankyrin repeat). Interacts with PPP1CA only in the presence of PPP1R16B. In terms of processing, acylated. Acylation may be a prerequisite for conversion of the monomeric 37 kDa laminin receptor precursor (37LRP) to the mature dimeric 67 kDa laminin receptor (67LR), and may provide a mechanism for membrane association. Post-translationally, cleaved by stromelysin-3 (ST3) at the cell surface. Cleavage by stromelysin-3 may be a mechanism to alter cell-extracellular matrix interactions.

The protein localises to the cell membrane. It is found in the cytoplasm. Its subcellular location is the nucleus. In terms of biological role, required for the assembly and/or stability of the 40S ribosomal subunit. Required for the processing of the 20S rRNA-precursor to mature 18S rRNA in a late step of the maturation of 40S ribosomal subunits. Also functions as a cell surface receptor for laminin. Plays a role in cell adhesion to the basement membrane and in the consequent activation of signaling transduction pathways. May play a role in cell fate determination and tissue morphogenesis. Also acts as a receptor for several other ligands, including the pathogenic prion protein, viruses, and bacteria. Acts as a PPP1R16B-dependent substrate of PPP1CA. The polypeptide is Small ribosomal subunit protein uS2 (Oryctolagus cuniculus (Rabbit)).